The chain runs to 354 residues: 4-hydroxy-2-oxovalerate aldolase 6 (354 aa).

The Pyruvate carboxyltransferase domain maps to 10–262 (VRIVDTTLRD…ATGLDVMATL (253 aa)). A substrate-binding site is contributed by 18 to 19 (RD). Residue D19 participates in Mn(2+) binding. The active-site Proton acceptor is the H22. 2 residues coordinate substrate: S172 and H201. 2 residues coordinate Mn(2+): H201 and H203. Position 292 (Y292) interacts with substrate.

It belongs to the 4-hydroxy-2-oxovalerate aldolase family.

It catalyses the reaction (S)-4-hydroxy-2-oxopentanoate = acetaldehyde + pyruvate. In Rhodococcus jostii (strain RHA1), this protein is 4-hydroxy-2-oxovalerate aldolase 6.